A 187-amino-acid polypeptide reads, in one-letter code: GTP cyclohydrolase 1 (187 aa).

Residues Cys-76, His-79, and Cys-148 each coordinate Zn(2+).

This sequence belongs to the GTP cyclohydrolase I family. As to quaternary structure, toroid-shaped homodecamer, composed of two pentamers of five dimers.

The catalysed reaction is GTP + H2O = 7,8-dihydroneopterin 3'-triphosphate + formate + H(+). Its pathway is cofactor biosynthesis; 7,8-dihydroneopterin triphosphate biosynthesis; 7,8-dihydroneopterin triphosphate from GTP: step 1/1. This is GTP cyclohydrolase 1 from Streptococcus agalactiae serotype V (strain ATCC BAA-611 / 2603 V/R).